The primary structure comprises 59 residues: Crassipeptide cce9a (59 aa).

A propeptide spanning residues 1–30 is cleaved from the precursor; the sequence is ADNHARVAGPRAVASGRYATEKAFLQMMTR.

Contains 3 disulfide bonds. As to expression, expressed by the venom duct.

It is found in the secreted. In terms of biological role, crassispirid snail peptide that induces sleep-like symptoms in young mice (12 and 14 days) and hyperactivity in older mice (16 days), when intracranially injected. In Crassispira cerithina (Sea snail), this protein is Crassipeptide cce9a.